A 438-amino-acid chain; its full sequence is uncharacterized protein (438 aa).

The first 19 residues, 1–19 (MKKLLLAASIICLASAGLA), serve as a signal peptide directing secretion.

This is an uncharacterized protein from Rickettsia conorii (strain ATCC VR-613 / Malish 7).